The sequence spans 352 residues: RING finger protein 39 (352 aa).

The segment at 20–67 (CPLCGGPFEDPVLLACEHSFCRSCLARCWGSPAAPGSEEATPSCPCCG) adopts an RING-type zinc-finger fold. The disordered stretch occupies residues 98 to 118 (PGARTGRRRGGRIPTMGCLDP). The region spanning 142 to 352 (EDLPEDYPVV…APLRIVPGEA (211 aa)) is the B30.2/SPRY domain.

Expressed in the hippocampus. Expression is rapidly up-regulated in granule cells of the dentate gyrus after LTP induction.

The protein resides in the cytoplasm. The catalysed reaction is S-ubiquitinyl-[E2 ubiquitin-conjugating enzyme]-L-cysteine + [acceptor protein]-L-lysine = [E2 ubiquitin-conjugating enzyme]-L-cysteine + N(6)-ubiquitinyl-[acceptor protein]-L-lysine.. It functions in the pathway protein modification; protein ubiquitination. Its function is as follows. Plays an inhibitory role in anti-RNA viral innate immunity by targeting the adapter DDX3X and promoting its 'Lys-48'-linked polyubiquitination. Alternatively, enhances the cGAS-STING pathway activation by promoting 'Lys-63'-linked ubiquitination of STING1, facilitating the STING1-TBK1 complex formation and STING1 activation. The chain is RING finger protein 39 (Rnf39) from Rattus norvegicus (Rat).